Here is a 333-residue protein sequence, read N- to C-terminus: MRQGTFFCIDAHTCGNPVRLVAGGVPPLEGNTMSEKRQYFLEHYDWIRQALMFEPRGHSMMSGSVVLPPCSDNADASILFIETSGCLPMCGHGTIGTVTTAIENRLITPKEEGRLILDVPAGQIEVHYQTKGDKVTSVKIFNVPAYLAHQDVTVEIEGLGEITVDVAYGGNYYVIVDPQENYAGLEHYSPDEILMLSPKVRTAVSKAVECIHPNDPTVCGVSHVLWTGKPTQEGATARNAVFYGDKALDRSPCGTGTSARMAQWHAKGKLKSGEDFVHESIIGSLFNGRIEGITEVNGQTAILPSIEGWAQVYGHNTIWVDDEDPYAYGFEVK.

Belongs to the proline racemase family.

This is an uncharacterized protein from Vibrio parahaemolyticus serotype O3:K6 (strain RIMD 2210633).